A 430-amino-acid polypeptide reads, in one-letter code: Pre-B-cell leukemia transcription factor 1 (430 aa).

The disordered stretch occupies residues 1 to 40 (MDEQPRLMHSHAGVGMAGHPGLSQHLQDGAGGTEGEGGRK). The PBC domain occupies 38–232 (GRKQDIGDIL…VMILRSRFLD (195 aa)). A PBC-A region spans residues 45-124 (DILQQIMTIT…EGVAGPEKGG (80 aa)). The tract at residues 127 to 232 (AAAAAAAAAS…VMILRSRFLD (106 aa)) is PBC-B. Residues 233-295 (ARRKRRNFNK…NKRIRYKKNI (63 aa)) constitute a DNA-binding region (homeobox; TALE-type). Disordered regions lie at residues 317-338 (SAHGSQANSPSTPNSAGSSSSF) and 395-430 (SPQGISANGGWQDATTPSSVTSPTEGPGSVHSDTSN). Over residues 323 to 338 (ANSPSTPNSAGSSSSF) the composition is skewed to low complexity. The span at 407 to 418 (DATTPSSVTSPT) shows a compositional bias: polar residues.

Belongs to the TALE/PBX homeobox family. In terms of assembly, forms a heterodimer with MEIS1 which binds DNA. The PBX1-MEIS1 heterodimer binds a cAMP-responsive sequence in CYP17. It also binds a consensus region in the SOX3 promoter. PBX1 forms heterotrimers with MEIS1 and a number of HOX proteins including HOXA9, HOXD4, HOXD9 and HOXD10. Forms heterodimers with HOXA1, HOXA5, HOXB7 and HOXB8 which bind the 5'-TGATTGAT-3' consensus sequence. Also forms heterodimers with HOXA5, HOXB7, HOXB8, HOXC8 and HOXD4 which bind the 5'-ATCAATCAA-3' consensus sequence. Interacts with PBXIP1. Interacts with TLX1. Interacts with FOXC1. Interacts with MN1. Interacts with MEIS2 isoform 4, SP1, SP3 and KLF4. As to quaternary structure, part of a PDX1:PBX1b:MEIS2B complex; PBX1b recruits MEIS2B to the complex. Expressed in the kidney. Expressed in the endothelial cells of the glomeruli and interstitium (at protein level). Expressed in all tissues except in cells of the B and T lineage. Expressed strongly in kidney and brain.

Its subcellular location is the nucleus. In terms of biological role, transcription factor which binds the DNA sequence 5'-TGATTGAT-3' as part of a heterodimer with HOX proteins such as HOXA1, HOXA5, HOXB7 and HOXB8. Binds to the DNA sequence 5'-TGATTGAC-3' in complex with a nuclear factor which is not a class I HOX protein. Has also been shown to bind the DNA sequence 5'-ATCAATCAA-3' cooperatively with HOXA5, HOXB7, HOXB8, HOXC8 and HOXD4. Acts as a transcriptional activator of PF4 in complex with MEIS1. Also activates transcription of SOX3 in complex with MEIS1 by binding to the 5'-TGATTGAC-3' consensus sequence. In natural killer cells, binds to the NFIL3 promoter and acts as a transcriptional activator of NFIL3, promoting natural killer cell development. Plays a role in the cAMP-dependent regulation of CYP17A1 gene expression via its cAMP-regulatory sequence (CRS1). Probably in complex with MEIS2, involved in transcriptional regulation by KLF4. Acts as a transcriptional activator of NKX2-5 and a transcriptional repressor of CDKN2B. Together with NKX2-5, required for spleen development through a mechanism that involves CDKN2B repression. Its function is as follows. As part of a PDX1:PBX1b:MEIS2B complex in pancreatic acinar cells, is involved in the transcriptional activation of the ELA1 enhancer; the complex binds to the enhancer B element and cooperates with the transcription factor 1 complex (PTF1) bound to the enhancer A element. The sequence is that of Pre-B-cell leukemia transcription factor 1 (PBX1) from Homo sapiens (Human).